The sequence spans 402 residues: Argininosuccinate synthase (402 aa).

An ATP-binding site is contributed by 9 to 17 (AYSGGLDTS). Residue tyrosine 86 participates in L-citrulline binding. ATP is bound at residue glycine 116. 3 residues coordinate L-aspartate: threonine 118, asparagine 122, and aspartate 123. An L-citrulline-binding site is contributed by asparagine 122. Residues arginine 126, serine 174, serine 183, glutamate 259, and tyrosine 271 each contribute to the L-citrulline site.

It belongs to the argininosuccinate synthase family. Type 1 subfamily. In terms of assembly, homotetramer.

Its subcellular location is the cytoplasm. The enzyme catalyses L-citrulline + L-aspartate + ATP = 2-(N(omega)-L-arginino)succinate + AMP + diphosphate + H(+). The protein operates within amino-acid biosynthesis; L-arginine biosynthesis; L-arginine from L-ornithine and carbamoyl phosphate: step 2/3. The chain is Argininosuccinate synthase from Geobacillus sp. (strain WCH70).